The sequence spans 141 residues: Hemoglobin subunit alpha (141 aa).

Residues 1 to 22 (VLSEDDKNRVRTSVGKNPELPG) form a disordered region. The region spanning 1-141 (VLSEDDKNRV…VSEVLESKYR (141 aa)) is the Globin domain. H58 serves as a coordination point for O2. Residue H87 coordinates heme b.

The protein belongs to the globin family. Heterotetramer of two alpha chains and two beta chains. As to expression, red blood cells.

Functionally, involved in oxygen transport from the lung to the various peripheral tissues. This Vipera aspis (Aspic viper) protein is Hemoglobin subunit alpha (HBA).